The primary structure comprises 448 residues: Cysteine--tRNA ligase (448 aa).

Position 27 (Cys27) interacts with Zn(2+). A 'HIGH' region motif is present at residues 29–39 (PTVYNYIHVGN). Residues Cys210, His235, and Glu239 each contribute to the Zn(2+) site. The 'KMSKS' region signature appears at 267-271 (KMSKS). Position 270 (Lys270) interacts with ATP.

Belongs to the class-I aminoacyl-tRNA synthetase family. In terms of assembly, monomer. Zn(2+) is required as a cofactor.

Its subcellular location is the cytoplasm. The enzyme catalyses tRNA(Cys) + L-cysteine + ATP = L-cysteinyl-tRNA(Cys) + AMP + diphosphate. The protein is Cysteine--tRNA ligase of Lactococcus lactis subsp. cremoris (strain MG1363).